The sequence spans 146 residues: Large ribosomal subunit protein uL23m (146 aa).

Residues 108–146 (PDLFPEKEPTSPDPLEEELPQQRQSSDPRCPGIPSWFGL) are disordered.

The protein belongs to the universal ribosomal protein uL23 family. As to quaternary structure, component of the mitochondrial ribosome large subunit (39S) which comprises a 16S rRNA and about 50 distinct proteins.

The protein localises to the mitochondrion. The chain is Large ribosomal subunit protein uL23m (Mrpl23) from Rattus norvegicus (Rat).